The following is a 581-amino-acid chain: MKYSTVFTALTALFAQASATAIPAVRSPLAPRQSTTASCANSATSRSCWGEYSIDTNWYDVTPNTGVTREYWLSVENSTITPDGYTRSAMTFNGTVPGPAITADWGDNLIIHVTNNLQHNGTSIHWHGIRQLGSLEYDGVPGVTQCPIAPGDTLTYKFQATQYGTTWYHSHFSLQYADGLFGPLIINGPATADYDEDVGAIFLQDWAHKSVFEIWDSARQGAPPALENTLMNGTNIYDCSASTDANCVGGGKKFELTFVEGTKYRLRLINVGIDSHFEFAIDNHTLTVIANDLVPIVPYTTDTLLIGIGQRYDVIVEANAAADNYWIRGNWGTTCSSNSEAANATGILRYDSSSTVDPTSVGVTPRGTCADEPVASLVPHLALDVGGYSLVDEQVSFAFTNYFTWTINSSSLLLDWSSPTTLKIFNNETIFPTDYNVVALNQTDANEEWVVYVIEDLTGFGIWHPIHLHGHDFYVVAQETDVFSATKSPANFNLVNPPRRDVAALPGNGYLAIAFKLDNPGSWLLHCHIAWHASEGLAMQFVESQSSIAIGMSDTDIFEDTCANWNAYTPTELFAEDDSGI.

The signal sequence occupies residues M1 to A19. Plastocyanin-like domains are found at residues S74 to T191 and D197 to S353. 3 N-linked (GlcNAc...) asparagine glycosylation sites follow: N77, N93, and N120. The Cu cation site is built by H125, H127, H169, and H171. An intrachain disulfide couples C146 to C562. N-linked (GlcNAc...) asparagine glycans are attached at residues N232, N283, N343, N408, N427, and N441. In terms of domain architecture, Plastocyanin-like 3 spans L413–S547. Positions 464, 467, 469, 526, 527, 528, and 532 each coordinate Cu cation.

It belongs to the multicopper oxidase family. Cu cation serves as cofactor.

The protein localises to the secreted. It catalyses the reaction 4 hydroquinone + O2 = 4 benzosemiquinone + 2 H2O. Its function is as follows. Lignin degradation and detoxification of lignin-derived products. The sequence is that of Laccase-2 (lcc2) from Botryotinia fuckeliana (Noble rot fungus).